Reading from the N-terminus, the 452-residue chain is NADH-ubiquinone oxidoreductase chain 4 (452 aa).

14 helical membrane passes run 4–24 (LVLG…SMVW), 29–49 (VGSV…MTIS), 59–79 (FVSL…LLAS), 88–110 (LIYQ…LAFM), 114–136 (LLLF…TRWG), 144–164 (AGTY…ICLI), 182–202 (VFQL…AFLV), 221–241 (PIAG…YGMM), 252–272 (MLSS…MGGI), 282–304 (LIAY…GVAW), 309–331 (AMVL…NLWY), 345–365 (LIMI…MNMA), 390–410 (IVYM…LFGM), and 432–452 (LLTT…GLMF).

This sequence belongs to the complex I subunit 4 family.

The protein localises to the mitochondrion membrane. The enzyme catalyses a ubiquinone + NADH + 5 H(+)(in) = a ubiquinol + NAD(+) + 4 H(+)(out). Its function is as follows. Core subunit of the mitochondrial membrane respiratory chain NADH dehydrogenase (Complex I) that is believed to belong to the minimal assembly required for catalysis. Complex I functions in the transfer of electrons from NADH to the respiratory chain. The immediate electron acceptor for the enzyme is believed to be ubiquinone. The protein is NADH-ubiquinone oxidoreductase chain 4 (ND4) of Branchiostoma lanceolatum (Common lancelet).